Reading from the N-terminus, the 258-residue chain is Phosphate import ATP-binding protein PstB (258 aa).

Residues Leu-5 to Lys-247 form the ABC transporter domain. Position 37–44 (Gly-37–Thr-44) interacts with ATP.

Belongs to the ABC transporter superfamily. Phosphate importer (TC 3.A.1.7) family. As to quaternary structure, the complex is composed of two ATP-binding proteins (PstB), two transmembrane proteins (PstC and PstA) and a solute-binding protein (PstS).

It is found in the cell membrane. The catalysed reaction is phosphate(out) + ATP + H2O = ADP + 2 phosphate(in) + H(+). Functionally, part of the ABC transporter complex PstSACB involved in phosphate import. Responsible for energy coupling to the transport system. In Mycobacterium leprae (strain TN), this protein is Phosphate import ATP-binding protein PstB.